Here is a 679-residue protein sequence, read N- to C-terminus: Altered inheritance of mitochondria protein 21 (679 aa).

The tract at residues 1–95 is disordered; the sequence is MPSEVTPKVP…EELNNVMNNT (95 aa). Residues 9 to 19 are compositionally biased toward basic and acidic residues; it reads VPERPSRRKTS. Threonine 18 carries the phosphothreonine modification. At serine 36 the chain carries Phosphoserine. A Phosphothreonine modification is found at threonine 58. Serine 70 is subject to Phosphoserine. Phosphothreonine is present on threonine 85. Residues 86–95 are compositionally biased toward polar residues; the sequence is EELNNVMNNT. At serine 104 the chain carries Phosphoserine. Disordered stretches follow at residues 107-522 and 548-679; these read SKHN…EKIE and LMDT…FHSL. Over residues 109–119 the composition is skewed to basic residues; the sequence is HNIHSVSRKKS. 2 stretches are compositionally biased toward polar residues: residues 133-149 and 164-178; these read QNGQ…TNPS and SAIS…SNNE. The segment covering 179 to 213 has biased composition (basic and acidic residues); sequence VTEHSDSEDLTEKQKVHAALDNEAGDGSHFEEKLI. Phosphoserine is present on residues serine 183, serine 206, and serine 231. The span at 243–272 shows a compositional bias: basic and acidic residues; it reads SDDKAEKFTKHPESSLEELQKHQEQQEEKI. Threonine 277 carries the phosphothreonine modification. Serine 284 bears the Phosphoserine mark. Residues 296-323 are compositionally biased toward polar residues; it reads EVNSQPQGPSDTETVIAATSSNVPSQIA. Phosphoserine is present on serine 324. 2 stretches are compositionally biased toward basic and acidic residues: residues 339 to 351 and 372 to 383; these read KKDF…KEEL and EESKIPKIPSER. Positions 383–396 are interaction with SH3 domain of ABP1; it reads RPKRRAPPPVPKKP. Composition is skewed to polar residues over residues 414–427 and 437–452; these read DLHN…TTAS and SSIT…TSKL. Residues 471-482 show a composition bias toward basic and acidic residues; that stretch reads LEKKLSSPDTES. The span at 483–492 shows a compositional bias: polar residues; sequence KLGTQDQSQA. Basic residues predominate over residues 501–512; it reads RRGRGPRGRKLP. Phosphothreonine is present on threonine 552. Basic and acidic residues predominate over residues 556–576; the sequence is QAERALDEKSKSIPEEQREQS. Serine 576 is modified (phosphoserine). Residues 603–613 show a composition bias toward polar residues; sequence PLSQLPQTNAV. Phosphoserine is present on residues serine 620, serine 623, serine 625, serine 627, serine 667, serine 671, serine 675, and serine 678. Residues 667–679 show a composition bias toward basic and acidic residues; the sequence is SALHSEEASFHSL.

The protein belongs to the AIM21 family. As to quaternary structure, interacts with ribosomes. Interacts with ABP1.

It localises to the cytoplasm. The protein localises to the cytoskeleton. Its subcellular location is the actin patch. Involved in mitochondrial migration along actin filaments. The protein is Altered inheritance of mitochondria protein 21 (AIM21) of Saccharomyces cerevisiae (strain YJM789) (Baker's yeast).